The chain runs to 244 residues: Phosphoadenosine 5'-phosphosulfate reductase (244 aa).

Catalysis depends on C239, which acts as the Nucleophile; cysteine thiosulfonate intermediate.

It belongs to the PAPS reductase family. CysH subfamily.

It localises to the cytoplasm. The catalysed reaction is [thioredoxin]-disulfide + sulfite + adenosine 3',5'-bisphosphate + 2 H(+) = [thioredoxin]-dithiol + 3'-phosphoadenylyl sulfate. It participates in sulfur metabolism; hydrogen sulfide biosynthesis; sulfite from sulfate: step 3/3. Catalyzes the formation of sulfite from phosphoadenosine 5'-phosphosulfate (PAPS) using thioredoxin as an electron donor. In Escherichia coli O81 (strain ED1a), this protein is Phosphoadenosine 5'-phosphosulfate reductase.